Here is a 435-residue protein sequence, read N- to C-terminus: 3-phosphoshikimate 1-carboxyvinyltransferase (435 aa).

Positions 21, 22, and 26 each coordinate 3-phosphoshikimate. Lys-21 is a binding site for phosphoenolpyruvate. Positions 99 and 127 each coordinate phosphoenolpyruvate. The 3-phosphoshikimate site is built by Ser-173, Gln-175, Asp-323, and Lys-350. A phosphoenolpyruvate-binding site is contributed by Gln-175. Asp-323 serves as the catalytic Proton acceptor. The phosphoenolpyruvate site is built by Arg-354 and Arg-396.

The protein belongs to the EPSP synthase family. In terms of assembly, monomer.

It localises to the cytoplasm. It carries out the reaction 3-phosphoshikimate + phosphoenolpyruvate = 5-O-(1-carboxyvinyl)-3-phosphoshikimate + phosphate. It participates in metabolic intermediate biosynthesis; chorismate biosynthesis; chorismate from D-erythrose 4-phosphate and phosphoenolpyruvate: step 6/7. Its function is as follows. Catalyzes the transfer of the enolpyruvyl moiety of phosphoenolpyruvate (PEP) to the 5-hydroxyl of shikimate-3-phosphate (S3P) to produce enolpyruvyl shikimate-3-phosphate and inorganic phosphate. The sequence is that of 3-phosphoshikimate 1-carboxyvinyltransferase from Akkermansia muciniphila (strain ATCC BAA-835 / DSM 22959 / JCM 33894 / BCRC 81048 / CCUG 64013 / CIP 107961 / Muc).